The chain runs to 371 residues: S-adenosylmethionine:tRNA ribosyltransferase-isomerase (371 aa).

It belongs to the QueA family. Monomer.

It is found in the cytoplasm. The catalysed reaction is 7-aminomethyl-7-carbaguanosine(34) in tRNA + S-adenosyl-L-methionine = epoxyqueuosine(34) in tRNA + adenine + L-methionine + 2 H(+). It participates in tRNA modification; tRNA-queuosine biosynthesis. Functionally, transfers and isomerizes the ribose moiety from AdoMet to the 7-aminomethyl group of 7-deazaguanine (preQ1-tRNA) to give epoxyqueuosine (oQ-tRNA). This Rickettsia akari (strain Hartford) protein is S-adenosylmethionine:tRNA ribosyltransferase-isomerase.